The sequence spans 182 residues: MWYSKCSWTLVVLVALFALVTGSCLEYGHSCWGAHGKRSGGKAVIDAKQHPLPNSYGLDSVVEQLYNNNNNNQNNQDDDNNDDDSNRNTNANSANNIPLAAPAIISRRESEDRRIGGLKWAQLMRQHRYQLRQLQDQQQQGRGRGGQGQYDAAAESWRKLQQALQAQIDADNENYSGYELTK.

Residues 1–22 form the signal peptide; the sequence is MWYSKCSWTLVVLVALFALVTG. The cysteines at positions 24 and 31 are disulfide-linked. H35 is modified (histidine amide). Residues 39–182 constitute a propeptide that is removed on maturation; it reads SGGKAVIDAK…ENYSGYELTK (144 aa). Disordered stretches follow at residues 67–103 and 133–154; these read NNNNNNQNNQDDDNNDDDSNRNTNANSANNIPLAAPA and QLQDQQQQGRGRGGQGQYDAAA. Residues 87–103 are compositionally biased toward low complexity; it reads RNTNANSANNIPLAAPA. An N-linked (GlcNAc...) asparagine glycan is attached at N174.

As to expression, expressed in endocrine cells of the larval midgut (at protein level). In the brain, expressed in the optic lobes, lateral protocerebrum, subesophageal ganglion, and intermediate and superior medial protocerebrum (at protein level). Expressed in DN1a neurons but not in other clock neurons and expression follows a rhythmic pattern controlled by the circadian clock (at protein level). In the posterior midgut, expressed in enteroendocrine cells (at protein level). Low levels in larval brain with higher levels in larval and adult gut and adult brain.

The protein localises to the secreted. In terms of biological role, neuropeptide ligand for the CCHamide-1 receptor CCHa1-R. Neuromessenger mediating signaling between neuronal cells of the circadian clock network involved in regulation of sleep latency (the time required to fall asleep), amount of sleep and depth of sleep (arousability). Together with PDF, involved in regulating intensity and periodicity of daytime activity. In subsets of clock neurons modulates the rhythmic expression of PDP1 and PDF, and together with PDF modulates the rhythmic expression of circadian protein PER/period, but not TIM/timeless. Mediates signaling from DN1a (anterior dorsal neurons 1) clock neurons to s-LNv (small ventral lateral neurons) clock neurons through CCHa1-R, contributing to regulation of activity rhythms by the circadian clock, particularly in the morning. May be involved in signaling between clock neurons and non-clock neurons, such as the fan-shaped body, involved in sleep homeostasis. In response to a high protein diet mediates hormonal signaling between the gut and a CCHa1-R expressing subset of dopaminergic cells in the protocerebral anterior medial (PAM) cluster of the brain. This suppresses arousability by mechano-sensory stimulation (but not thermal stimulation) but is not involved in regulation of sleep patterns. The polypeptide is Neuropeptide CCHamide-1 (Drosophila melanogaster (Fruit fly)).